We begin with the raw amino-acid sequence, 340 residues long: Ketol-acid reductoisomerase (NADP(+)) (340 aa).

Residues 2–182 (ANIYYENHAD…GCTRAGVIET (181 aa)) form the KARI N-terminal Rossmann domain. NADP(+) is bound by residues 25–28 (FGSQ), S51, S53, and 83–86 (DTAQ). H108 is a catalytic residue. G134 is an NADP(+) binding site. The KARI C-terminal knotted domain occupies 183–328 (TFAEETETDL…RELRRMMPFV (146 aa)). Mg(2+)-binding residues include D191, E195, E227, and E231. S252 serves as a coordination point for substrate.

The protein belongs to the ketol-acid reductoisomerase family. Requires Mg(2+) as cofactor.

It catalyses the reaction (2R)-2,3-dihydroxy-3-methylbutanoate + NADP(+) = (2S)-2-acetolactate + NADPH + H(+). It carries out the reaction (2R,3R)-2,3-dihydroxy-3-methylpentanoate + NADP(+) = (S)-2-ethyl-2-hydroxy-3-oxobutanoate + NADPH + H(+). It participates in amino-acid biosynthesis; L-isoleucine biosynthesis; L-isoleucine from 2-oxobutanoate: step 2/4. It functions in the pathway amino-acid biosynthesis; L-valine biosynthesis; L-valine from pyruvate: step 2/4. Its function is as follows. Involved in the biosynthesis of branched-chain amino acids (BCAA). Catalyzes an alkyl-migration followed by a ketol-acid reduction of (S)-2-acetolactate (S2AL) to yield (R)-2,3-dihydroxy-isovalerate. In the isomerase reaction, S2AL is rearranged via a Mg-dependent methyl migration to produce 3-hydroxy-3-methyl-2-ketobutyrate (HMKB). In the reductase reaction, this 2-ketoacid undergoes a metal-dependent reduction by NADPH to yield (R)-2,3-dihydroxy-isovalerate. The polypeptide is Ketol-acid reductoisomerase (NADP(+)) (Roseiflexus castenholzii (strain DSM 13941 / HLO8)).